A 667-amino-acid chain; its full sequence is Probable potassium transport system protein Kup (667 aa).

Transmembrane regions (helical) follow at residues 16–36 (GFII…LYTM), 58–78 (VSLI…LIAL), 101–121 (WLII…ALTP), 146–166 (TNVI…QRFG), 167–187 (TGVI…VLGI), 221–241 (IFIL…YSDL), 253–273 (WPFV…WILA), 294–314 (VYLV…LISG), 343–363 (LYIP…VLYF), 373–393 (YGLA…YYLI), 399–419 (PLLA…FFLA), and 431–451 (VVVL…GTVI).

This sequence belongs to the HAK/KUP transporter (TC 2.A.72) family.

The protein localises to the cell membrane. The catalysed reaction is K(+)(in) + H(+)(in) = K(+)(out) + H(+)(out). Its function is as follows. Transport of potassium into the cell. Likely operates as a K(+):H(+) symporter. The sequence is that of Probable potassium transport system protein Kup from Streptococcus equi subsp. zooepidemicus (strain MGCS10565).